The following is a 142-amino-acid chain: Putative arsenate reductase (142 aa).

The protein belongs to the low molecular weight phosphotyrosine protein phosphatase family.

In terms of biological role, reduces arsenate [As(V)] to arsenite [As(III)]. This is Putative arsenate reductase (arsC) from Halobacterium salinarum (strain ATCC 700922 / JCM 11081 / NRC-1) (Halobacterium halobium).